The primary structure comprises 212 residues: uncharacterized protein (212 aa).

2 disordered regions span residues 1 to 25 (MARK…GRPN) and 165 to 212 (STSG…HWGG). A compositionally biased stretch (low complexity) spans 202–212 (RSSSARGHWGG).

This is an uncharacterized protein from Escherichia coli (strain K12).